The primary structure comprises 349 residues: Cytoplasmic tRNA 2-thiolation protein 2 (349 aa).

Belongs to the CTU2/NCS2 family.

The protein resides in the cytoplasm. Its pathway is tRNA modification; 5-methoxycarbonylmethyl-2-thiouridine-tRNA biosynthesis. Plays a central role in 2-thiolation of mcm(5)S(2)U at tRNA wobble positions of tRNA(Lys), tRNA(Glu) and tRNA(Gln). May act by forming a heterodimer with tut-1/ctu-1 that ligates sulfur from thiocarboxylated urm-1 onto the uridine of tRNAs at wobble position. The polypeptide is Cytoplasmic tRNA 2-thiolation protein 2 (Caenorhabditis briggsae).